A 332-amino-acid polypeptide reads, in one-letter code: CMRF35-like molecule 9 (332 aa).

The signal sequence occupies residues 1 to 18 (MRLLVLLWGCLLLPGYEA). The 103-residue stretch at 19 to 121 (LEGPEEISGF…RGPDESLLIS (103 aa)) folds into the Ig-like V-type domain. Residues 19 to 247 (LEGPEEISGF…KPRVSIPMVR (229 aa)) lie on the Extracellular side of the membrane. A disulfide bridge connects residues Cys-37 and Cys-107. Asn-96 carries an N-linked (GlcNAc...) asparagine glycan. Residues Thr-137, Thr-143, Thr-144, Thr-155, Thr-161, Thr-170, Thr-171, Thr-177, Thr-187, and Thr-195 are each glycosylated (O-linked (GalNAc...) threonine). The tract at residues 146–239 (LQPKAKAQQT…PALSSGSSKP (94 aa)) is disordered. Over residues 147–158 (QPKAKAQQTQPP) the composition is skewed to low complexity. Residues 168–181 (AATTAKQGKTGAEA) are compositionally biased toward low complexity. The span at 186–205 (GTSQYGHERTSQYTGTSPHP) shows a compositional bias: polar residues. Residue Ser-196 is glycosylated (O-linked (GalNAc...) serine). O-linked (GalNAc...) threonine glycans are attached at residues Thr-199 and Thr-201. An O-linked (GalNAc...) serine glycan is attached at Ser-202. O-linked (GalNAc...) threonine glycosylation is present at Thr-207. Residues Ser-208, Ser-213, Ser-214, and Ser-222 are each glycosylated (O-linked (GalNAc...) serine). Residues 220–239 (LDSTSAEDTSPALSSGSSKP) show a composition bias toward polar residues. O-linked (GalNAc...) threonine glycosylation occurs at Thr-223. A glycan (O-linked (GalNAc...) serine) is linked at Ser-224. Thr-228 carries O-linked (GalNAc...) threonine glycosylation. Residues Ser-229 and Ser-237 are each glycosylated (O-linked (GalNAc...) serine). Residues 248-268 (ILAPVLVLLSLLSAAGLIAFC) traverse the membrane as a helical segment. The Cytoplasmic segment spans residues 269-332 (SHLLLWRKEA…ELGFSKFVSA (64 aa)).

This sequence belongs to the CD300 family. In terms of processing, O-glycosylated with sialylated oligosaccharides. As to expression, highly expressed in heart, skeletal muscle and placenta.

The protein localises to the apical cell membrane. It localises to the basolateral cell membrane. Its subcellular location is the endosome. It is found in the multivesicular body membrane. Its function is as follows. Receptor which may mediate L-selectin-dependent lymphocyte rollings. Binds SELL in a calcium dependent manner. Binds lymphocyte. The polypeptide is CMRF35-like molecule 9 (CD300LG) (Homo sapiens (Human)).